The following is a 169-amino-acid chain: NAD(P)H-quinone oxidoreductase subunit J, chloroplastic (169 aa).

This sequence belongs to the complex I 30 kDa subunit family. NDH is composed of at least 16 different subunits, 5 of which are encoded in the nucleus.

It is found in the plastid. It localises to the chloroplast thylakoid membrane. It carries out the reaction a plastoquinone + NADH + (n+1) H(+)(in) = a plastoquinol + NAD(+) + n H(+)(out). It catalyses the reaction a plastoquinone + NADPH + (n+1) H(+)(in) = a plastoquinol + NADP(+) + n H(+)(out). NDH shuttles electrons from NAD(P)H:plastoquinone, via FMN and iron-sulfur (Fe-S) centers, to quinones in the photosynthetic chain and possibly in a chloroplast respiratory chain. The immediate electron acceptor for the enzyme in this species is believed to be plastoquinone. Couples the redox reaction to proton translocation, and thus conserves the redox energy in a proton gradient. The protein is NAD(P)H-quinone oxidoreductase subunit J, chloroplastic of Physcomitrium patens (Spreading-leaved earth moss).